The sequence spans 157 residues: Endoribonuclease YbeY (157 aa).

The Zn(2+) site is built by histidine 114, histidine 118, and histidine 124.

Belongs to the endoribonuclease YbeY family. It depends on Zn(2+) as a cofactor.

The protein localises to the cytoplasm. Its function is as follows. Single strand-specific metallo-endoribonuclease involved in late-stage 70S ribosome quality control and in maturation of the 3' terminus of the 16S rRNA. This chain is Endoribonuclease YbeY, found in Serratia proteamaculans (strain 568).